A 228-amino-acid chain; its full sequence is Large ribosomal subunit protein mL64 (228 aa).

Disordered regions lie at residues 20 to 44 (PRSR…DREN) and 186 to 228 (QRKR…KPSS). Residues 98–207 (TMQESLRVQQ…KKEARIAAMA (110 aa)) adopt a coiled-coil conformation. Residues 184 to 200 (KQQRKRLKEERQRQKKE) carry the Nuclear localization signal motif. Over residues 186-202 (QRKRLKEERQRQKKEAR) the composition is skewed to basic and acidic residues. The segment covering 212-228 (QDSAEAQDSAASGKPSS) has biased composition (low complexity).

It belongs to the mitochondrion-specific ribosomal protein mL64 family. Component of the mitochondrial ribosome large subunit (39S) which comprises a 16S rRNA and about 50 distinct proteins. Interacts with GADD45A, GADD45B and GADD45G. Interacts with NR4A1 via the NR4A1 AB domain. Interacts with ATAD3A and ATAD3B.

It localises to the mitochondrion. The protein localises to the nucleus. Its function is as follows. Acts as a negative regulator of G1 to S cell cycle phase progression by inhibiting cyclin-dependent kinases. Inhibitory effects are additive with GADD45 proteins but also occur in the absence of GADD45 proteins. Acts as a repressor of the orphan nuclear receptor NR4A1 by inhibiting AB domain-mediated transcriptional activity. May be involved in the hormone-mediated regulation of NR4A1 transcriptional activity. May play a role in mitochondrial protein synthesis. The protein is Large ribosomal subunit protein mL64 (Gadd45gip1) of Rattus norvegicus (Rat).